The sequence spans 824 residues: Sphingomyelin phosphodiesterase 4 (824 aa).

A helical transmembrane segment spans residues 777-797 (LAFLFIFYILGSLLSLGPLIC).

Mg(2+) is required as a cofactor.

The protein localises to the endoplasmic reticulum membrane. Its subcellular location is the golgi apparatus membrane. The protein resides in the nucleus envelope. It localises to the cell membrane. It is found in the sarcolemma. The enzyme catalyses a sphingomyelin + H2O = phosphocholine + an N-acylsphing-4-enine + H(+). Catalyzes the hydrolysis of membrane sphingomyelin to form phosphorylcholine and ceramide. It has a relevant role in the homeostasis of membrane sphingolipids, thereby influencing membrane integrity, and endoplasmic reticulum organization and function. May sensitize cells to DNA damage-induced apoptosis. The chain is Sphingomyelin phosphodiesterase 4 (smpd4) from Xenopus laevis (African clawed frog).